The following is an 80-amino-acid chain: Exodeoxyribonuclease 7 small subunit (80 aa).

It belongs to the XseB family. As to quaternary structure, heterooligomer composed of large and small subunits.

It localises to the cytoplasm. It carries out the reaction Exonucleolytic cleavage in either 5'- to 3'- or 3'- to 5'-direction to yield nucleoside 5'-phosphates.. In terms of biological role, bidirectionally degrades single-stranded DNA into large acid-insoluble oligonucleotides, which are then degraded further into small acid-soluble oligonucleotides. This chain is Exodeoxyribonuclease 7 small subunit, found in Marinomonas sp. (strain MWYL1).